The following is a 391-amino-acid chain: MAVSESQLKKMMSKYKYRDLTVRQTVNVIAMYKDLKPVLDSYVFNDGSSRELVNLTGTIPVRYRGNIYNIPICLWLLDTYPYNPPICFVKPTSSMTIKTGKHVDANGKIYLPYLHDWKHPRSELLELIQIMIVIFGEEPPVFSRPTVSASYPPYTATGPPNTSYMPGMPSGISAYPSGYPPNPSGYPGCPYPPAGPYPATTSSQYPSQPPVTTVGPSRDGTISEDTIRASLISAVSDKLRWRMKEEMDGAQAELNALKRTEEDLKKGHQKLEEMVTRLDQEVAEVDKNIELLKKKDEELSSALEKMENQSENNDIDEVIIPTAPLYKQILNLYAEENAIEDTIFYLGEALRRGVIDLDVFLKHVRLLSRKQFQLRALMQKARKTAGLSDLY.

Position 2 is an N-acetylalanine (A2). Positions 2 to 145 (AVSESQLKKM…GEEPPVFSRP (144 aa)) constitute a UEV domain. The interaction with CEP55 stretch occupies residues 159-163 (PPNTS). The segment at 197 to 220 (YPATTSSQYPSQPPVTTVGPSRDG) is disordered. Residues 200 to 215 (TTSSQYPSQPPVTTVG) are compositionally biased toward polar residues. Phosphothreonine is present on T221. The stretch at 237–317 (DKLRWRMKEE…NQSENNDIDE (81 aa)) forms a coiled coil. The PTAP/PSAP motif motif lies at 321 to 324 (PTAP). Residues 323 to 391 (APLYKQILNL…RKTAGLSDLY (69 aa)) form the SB domain.

This sequence belongs to the ubiquitin-conjugating enzyme family. UEV subfamily. Component of the ESCRT-I complex (endosomal sorting complex required for transport I) which consists of TSG101, VPS28, a VPS37 protein (VPS37A to -D) and MVB12A or MVB12B in a 1:1:1:1 stoichiometry. Interacts with VPS37A, VPS37B and VPS37C. Component of an ESCRT-I complex (endosomal sorting complex required for transport I) which consists of TSG101, VPS28, VPS37A and UBAP1 in a 1:1:1:1 stoichiometry. Interacts with DMAP1. Interacts with GMCL. Interacts with ubiquitin, stathmin and AATF. Interacts with HGS; the interaction mediates the association with the ESCRT-0 complex. Interacts with GGA1 and GGA3. Interacts (via UEV domain) with PDCD6IP/AIP1. Interacts with VPS28, SNF8 and VPS36. Self-associates. Interacts with MVB12A; the association appears to be mediated by the TSG101-VPS37 binary subcomplex. Interacts with VPS37D. Interacts with LRSAM1. Interacts with CEP55; the interaction is required for cytokinesis. Interacts with PDCD6. Interacts with LITAF. Interacts with murine leukemia virus Gag polyprotein (via PSAP motif). Interacts with MGRN1. Interacts with ARRDC1; recruits TSG101 to the plasma membrane. Monoubiquitinated at multiple sites by LRSAM1 and by MGRN1. Ubiquitination inactivates it, possibly by regulating its shuttling between an active membrane-bound protein and an inactive soluble form. Ubiquitination by MGRN1 requires the presence of UBE2D1. Ubiquitous. Higher expression in brain and mammary gland. Lower expression in liver and tumoral tissues.

It localises to the cytoplasm. The protein resides in the early endosome membrane. The protein localises to the late endosome membrane. Its subcellular location is the cytoskeleton. It is found in the microtubule organizing center. It localises to the centrosome. The protein resides in the midbody. The protein localises to the midbody ring. Its subcellular location is the nucleus. In terms of biological role, component of the ESCRT-I complex, a regulator of vesicular trafficking process. Binds to ubiquitinated cargo proteins and is required for the sorting of endocytic ubiquitinated cargos into multivesicular bodies (MVBs). Mediates the association between the ESCRT-0 and ESCRT-I complex. Required for completion of cytokinesis; the function requires CEP55. May be involved in cell growth and differentiation. Acts as a negative growth regulator. Required for the exosomal release of SDCBP, CD63 and syndecan. It may also play a role in the extracellular release of microvesicles that differ from the exosomes. The sequence is that of Tumor susceptibility gene 101 protein (Tsg101) from Mus musculus (Mouse).